The primary structure comprises 363 residues: Zinc phosphodiesterase ELAC protein 1 (363 aa).

Residues H62, H64, D66, H67, H182, D253, and H313 each contribute to the Zn(2+) site. D66 serves as the catalytic Proton acceptor.

This sequence belongs to the RNase Z family. Homodimer. The cofactor is Zn(2+).

Its subcellular location is the cytoplasm. The protein resides in the cytosol. It is found in the nucleus. The enzyme catalyses Endonucleolytic cleavage of RNA, removing extra 3' nucleotides from tRNA precursor, generating 3' termini of tRNAs. A 3'-hydroxy group is left at the tRNA terminus and a 5'-phosphoryl group is left at the trailer molecule.. Functionally, zinc phosphodiesterase, which displays some tRNA 3'-processing endonuclease activity. Specifically involved in tRNA repair: acts downstream of the ribosome-associated quality control (RQC) pathway by removing a 2',3'-cyclic phosphate from tRNAs following cleavage by ANKZF1. tRNAs are then processed by TRNT1. The chain is Zinc phosphodiesterase ELAC protein 1 (ELAC1) from Bos taurus (Bovine).